A 153-amino-acid chain; its full sequence is Ubiquitin-conjugating enzyme E2 35 (153 aa).

Positions 5 to 151 (NLPRRIIKET…AKEWTRLYAS (147 aa)) constitute a UBC core domain. The active-site Glycyl thioester intermediate is the Cys-89.

This sequence belongs to the ubiquitin-conjugating enzyme family. Interacts with yeast and human Mms2, with the RING domain of RGLG2 and with UEV1A, UEV1B, UEV1C and UEV1D. In terms of tissue distribution, ubiquitously expressed at low level. Mainly expressed in the vasculature.

The enzyme catalyses S-ubiquitinyl-[E1 ubiquitin-activating enzyme]-L-cysteine + [E2 ubiquitin-conjugating enzyme]-L-cysteine = [E1 ubiquitin-activating enzyme]-L-cysteine + S-ubiquitinyl-[E2 ubiquitin-conjugating enzyme]-L-cysteine.. The protein operates within protein modification; protein ubiquitination. Catalyzes the synthesis of non-canonical poly-ubiquitin chains that are linked through 'Lys-63'. This type of poly-ubiquitination does not lead to protein degradation by the proteasome. Mediates transcriptional activation of target genes. Required for postreplication repair of UV-damaged DNA and for adapting root developmental programs to suboptimal availability of iron. The sequence is that of Ubiquitin-conjugating enzyme E2 35 (UBC35) from Arabidopsis thaliana (Mouse-ear cress).